Reading from the N-terminus, the 200-residue chain is Pyridoxal 5'-phosphate synthase subunit PdxT (200 aa).

52-54 (GES) provides a ligand contact to L-glutamine. Cys84 functions as the Nucleophile in the catalytic mechanism. Residues Arg115 and 143 to 144 (IR) each bind L-glutamine. Catalysis depends on charge relay system residues His179 and Glu181.

The protein belongs to the glutaminase PdxT/SNO family. In terms of assembly, in the presence of PdxS, forms a dodecamer of heterodimers. Only shows activity in the heterodimer.

It carries out the reaction aldehydo-D-ribose 5-phosphate + D-glyceraldehyde 3-phosphate + L-glutamine = pyridoxal 5'-phosphate + L-glutamate + phosphate + 3 H2O + H(+). It catalyses the reaction L-glutamine + H2O = L-glutamate + NH4(+). It functions in the pathway cofactor biosynthesis; pyridoxal 5'-phosphate biosynthesis. Functionally, catalyzes the hydrolysis of glutamine to glutamate and ammonia as part of the biosynthesis of pyridoxal 5'-phosphate. The resulting ammonia molecule is channeled to the active site of PdxS. In Methanosarcina barkeri (strain Fusaro / DSM 804), this protein is Pyridoxal 5'-phosphate synthase subunit PdxT.